The chain runs to 155 residues: Endoribonuclease YbeY (155 aa).

Residues histidine 114, histidine 118, and histidine 124 each coordinate Zn(2+).

This sequence belongs to the endoribonuclease YbeY family. Zn(2+) serves as cofactor.

It localises to the cytoplasm. Single strand-specific metallo-endoribonuclease involved in late-stage 70S ribosome quality control and in maturation of the 3' terminus of the 16S rRNA. This chain is Endoribonuclease YbeY, found in Erwinia tasmaniensis (strain DSM 17950 / CFBP 7177 / CIP 109463 / NCPPB 4357 / Et1/99).